The following is a 333-amino-acid chain: Protoheme IX farnesyltransferase (333 aa).

The next 8 helical transmembrane spans lie at 36 to 56 (LIPLLLATTLGGMALTEGWPL), 61 to 81 (LVCTLGGGALAAAAAGVLNCL), 107 to 127 (AAFAGAVSCALAAATLLVSGV), 130 to 150 (LAAGLSLLGLCSYVLLYTALL), 158 to 178 (IVIGGVAGAIPPLVGAAAATG), 186 to 206 (WLFALVMVWTPAHFWALALLL), 243 to 263 (FLGVWALPEGGLLYGLLLLPF), and 284 to 304 (AKGLFRWSILYLFGICLLLVF).

Belongs to the UbiA prenyltransferase family. Protoheme IX farnesyltransferase subfamily.

Its subcellular location is the cell inner membrane. It carries out the reaction heme b + (2E,6E)-farnesyl diphosphate + H2O = Fe(II)-heme o + diphosphate. It participates in porphyrin-containing compound metabolism; heme O biosynthesis; heme O from protoheme: step 1/1. In terms of biological role, converts heme B (protoheme IX) to heme O by substitution of the vinyl group on carbon 2 of heme B porphyrin ring with a hydroxyethyl farnesyl side group. The sequence is that of Protoheme IX farnesyltransferase from Synechococcus sp. (strain WH7803).